The following is a 552-amino-acid chain: Threonylcarbamoyladenosine tRNA methylthiotransferase (552 aa).

The interval Tyr-31 to Thr-61 is disordered. An MTTase N-terminal domain is found at Gln-71–Lys-178. The [4Fe-4S] cluster site is built by Cys-80, Cys-115, Cys-144, Cys-221, Cys-225, and Cys-228. The Radical SAM core domain occupies Arg-207–Ala-438. Positions Ala-438–Asp-500 constitute a TRAM domain. The helical transmembrane segment at Phe-532 to Leu-552 threads the bilayer.

Belongs to the methylthiotransferase family. CDKAL1 subfamily. Requires [4Fe-4S] cluster as cofactor.

It is found in the membrane. The catalysed reaction is N(6)-L-threonylcarbamoyladenosine(37) in tRNA + (sulfur carrier)-SH + AH2 + 2 S-adenosyl-L-methionine = 2-methylsulfanyl-N(6)-L-threonylcarbamoyladenosine(37) in tRNA + (sulfur carrier)-H + 5'-deoxyadenosine + L-methionine + A + S-adenosyl-L-homocysteine + 2 H(+). Its function is as follows. Catalyzes the methylthiolation of N6-threonylcarbamoyladenosine (t(6)A), leading to the formation of 2-methylthio-N6-threonylcarbamoyladenosine (ms(2)t(6)A) at position 37 in tRNAs that read codons beginning with adenine. This chain is Threonylcarbamoyladenosine tRNA methylthiotransferase, found in Drosophila melanogaster (Fruit fly).